The primary structure comprises 172 residues: Ribosome maturation factor RimM (172 aa).

One can recognise a PRC barrel domain in the interval 96–170 (EENEFYFHEI…KITIEVMEGL (75 aa)).

It belongs to the RimM family. As to quaternary structure, binds ribosomal protein uS19.

The protein localises to the cytoplasm. Its function is as follows. An accessory protein needed during the final step in the assembly of 30S ribosomal subunit, possibly for assembly of the head region. Essential for efficient processing of 16S rRNA. May be needed both before and after RbfA during the maturation of 16S rRNA. It has affinity for free ribosomal 30S subunits but not for 70S ribosomes. This is Ribosome maturation factor RimM from Listeria monocytogenes serotype 4b (strain CLIP80459).